A 287-amino-acid chain; its full sequence is Mitochondrial glycine transporter A (287 aa).

Solcar repeat units lie at residues 7–97 (HPAV…LKQR), 104–188 (PGPL…TKHL), and 198–282 (YAPV…LMAQ). A run of 6 helical transmembrane segments spans residues 13–38 (FMCG…TRLQ), 72–98 (GVSP…KQRY), 110–135 (VLLG…TRFE), 163–186 (GLMA…SQTK), 202–228 (ANFS…KTHI), and 257–275 (GAVP…AWTV).

It belongs to the mitochondrial carrier (TC 2.A.29) family. SLC25A38 subfamily. At 24 hours post-fertilization, expressed predominantly in posterior blood island, posterior cardinal vein and circulating blood, as well as in somites, brain and retina. At 34 hours post-fertilization, becomes restricted to posterior blood island and circulating blood.

Its subcellular location is the mitochondrion inner membrane. The catalysed reaction is glycine(in) = glycine(out). Functionally, mitochondrial glycine transporter that imports glycine into the mitochondrial matrix. Plays an important role in providing glycine for the first enzymatic step in heme biosynthesis, the condensation of glycine with succinyl-CoA to produce 5-aminolevulinate (ALA) in the mitochondrial matrix. Required during erythropoiesis. Its function is as follows. May play a role as pro-apoptotic protein that induces caspase-dependent apoptosis. The sequence is that of Mitochondrial glycine transporter A (slc25a38a) from Danio rerio (Zebrafish).